A 38-amino-acid polypeptide reads, in one-letter code: Odorant-binding protein 2 (38 aa).

It belongs to the calycin superfamily. Lipocalin family. As to expression, nasal mucosa.

The protein resides in the secreted. Its subcellular location is the extracellular space. Functionally, this soluble protein may play a specific role in odor discrimination and perception. The polypeptide is Odorant-binding protein 2 (Hystrix cristata (North African crested porcupine)).